The chain runs to 261 residues: MDGKLRADEVAVTKSILKSTFNMWMDIIDVDVVIVGAGPSGLTAAKYLAQKGFKTVVLERHLSFGGGTWGGGMGFPNIVVEKPADDILREAGIKLDEVDGEEELFTADSVEVPAKLGVAAIDAGAKILTGIVVEDLILKEDKIAGVVIQSYAIEKAGLHIDPLTISAKYVIDSTGHDASAVHTLARKNKDLGIEVPGEKSMWAEKGENSLTRNTREIFPGLYVCGMAANAYHAGYRMGAIFGGMYLSGKKCAEMILEKMEK.

NAD(+) is bound by residues serine 40, 59–60, glycine 67, valine 133, and 159–161; these read ER and HID. Positions 161 and 176 each coordinate Fe cation. Positions 179 and 226 each coordinate NAD(+). Arginine 236 is a glycine binding site.

Belongs to the THI4 family. In terms of assembly, homooctamer; tetramer of dimers. Requires Fe(2+) as cofactor.

The enzyme catalyses hydrogen sulfide + glycine + NAD(+) = ADP-5-ethyl-4-methylthiazole-2-carboxylate + nicotinamide + 3 H2O + H(+). It participates in cofactor biosynthesis; thiamine diphosphate biosynthesis. Functionally, involved in the biosynthesis of the thiazole moiety of thiamine. Catalyzes the conversion of NAD and glycine to adenosine diphosphate 5-(2-hydroxyethyl)-4-methylthiazole-2-carboxylate (ADT), an adenylated thiazole intermediate, using free sulfide as a source of sulfur. The protein is Thiamine thiazole synthase of Methanococcus maripaludis (strain C6 / ATCC BAA-1332).